Reading from the N-terminus, the 393-residue chain is Small ribosomal subunit protein bS1 (393 aa).

S1 motif domains are found at residues Gly-16–Arg-90, Asn-108–Lys-173, Gly-194–Lys-262, and Gly-279–Lys-348. Polar residues predominate over residues Val-356–Asp-369. The interval Val-356–Gly-381 is disordered.

Belongs to the bacterial ribosomal protein bS1 family.

Its function is as follows. Binds mRNA; thus facilitating recognition of the initiation point. It is needed to translate mRNA with a short Shine-Dalgarno (SD) purine-rich sequence. This chain is Small ribosomal subunit protein bS1 (rpsA), found in Staphylococcus saprophyticus subsp. saprophyticus (strain ATCC 15305 / DSM 20229 / NCIMB 8711 / NCTC 7292 / S-41).